Reading from the N-terminus, the 21-residue chain is Protein YnfR (21 aa).

The protein is Protein YnfR of Escherichia coli (strain K12).